A 177-amino-acid polypeptide reads, in one-letter code: ATP synthase subunit delta (177 aa).

The protein belongs to the ATPase delta chain family. F-type ATPases have 2 components, F(1) - the catalytic core - and F(0) - the membrane proton channel. F(1) has five subunits: alpha(3), beta(3), gamma(1), delta(1), epsilon(1). F(0) has three main subunits: a(1), b(2) and c(10-14). The alpha and beta chains form an alternating ring which encloses part of the gamma chain. F(1) is attached to F(0) by a central stalk formed by the gamma and epsilon chains, while a peripheral stalk is formed by the delta and b chains.

The protein resides in the cell inner membrane. Functionally, f(1)F(0) ATP synthase produces ATP from ADP in the presence of a proton or sodium gradient. F-type ATPases consist of two structural domains, F(1) containing the extramembraneous catalytic core and F(0) containing the membrane proton channel, linked together by a central stalk and a peripheral stalk. During catalysis, ATP synthesis in the catalytic domain of F(1) is coupled via a rotary mechanism of the central stalk subunits to proton translocation. In terms of biological role, this protein is part of the stalk that links CF(0) to CF(1). It either transmits conformational changes from CF(0) to CF(1) or is implicated in proton conduction. The sequence is that of ATP synthase subunit delta from Idiomarina loihiensis (strain ATCC BAA-735 / DSM 15497 / L2-TR).